We begin with the raw amino-acid sequence, 464 residues long: tRNA modification GTPase MnmE (464 aa).

The (6S)-5-formyl-5,6,7,8-tetrahydrofolate site is built by arginine 29, glutamate 91, and arginine 131. A TrmE-type G domain is found at 226–387 (GLKVALTGKP…LINYLLKKCG (162 aa)). Residue asparagine 236 coordinates K(+). GTP contacts are provided by residues 236–241 (NVGKSS), 255–261 (TDLPGTT), and 280–283 (DTAG). Mg(2+) is bound at residue serine 240. 3 residues coordinate K(+): threonine 255, leucine 257, and threonine 260. Threonine 261 contacts Mg(2+). Lysine 464 serves as a coordination point for (6S)-5-formyl-5,6,7,8-tetrahydrofolate.

The protein belongs to the TRAFAC class TrmE-Era-EngA-EngB-Septin-like GTPase superfamily. TrmE GTPase family. As to quaternary structure, homodimer. Heterotetramer of two MnmE and two MnmG subunits. The cofactor is K(+).

It localises to the cytoplasm. Exhibits a very high intrinsic GTPase hydrolysis rate. Involved in the addition of a carboxymethylaminomethyl (cmnm) group at the wobble position (U34) of certain tRNAs, forming tRNA-cmnm(5)s(2)U34. In Prochlorococcus marinus (strain NATL2A), this protein is tRNA modification GTPase MnmE.